A 403-amino-acid chain; its full sequence is Acetate kinase (403 aa).

Asn9 contacts Mg(2+). An ATP-binding site is contributed by Lys16. A substrate-binding site is contributed by Arg93. The active-site Proton donor/acceptor is the Asp150. Residues 210-214, 284-286, and 332-336 contribute to the ATP site; these read HLGNG, DFR, and GVGEN. Glu388 is a binding site for Mg(2+).

The protein belongs to the acetokinase family. As to quaternary structure, homodimer. Mg(2+) is required as a cofactor. Requires Mn(2+) as cofactor.

It localises to the cytoplasm. The enzyme catalyses acetate + ATP = acetyl phosphate + ADP. It participates in metabolic intermediate biosynthesis; acetyl-CoA biosynthesis; acetyl-CoA from acetate: step 1/2. Catalyzes the formation of acetyl phosphate from acetate and ATP. Can also catalyze the reverse reaction. In Corynebacterium jeikeium (strain K411), this protein is Acetate kinase.